The sequence spans 144 residues: NADH dehydrogenase [ubiquinone] 1 alpha subcomplex subunit 13 (144 aa).

A2 is modified (N-acetylalanine). The chain crosses the membrane as a helical span at residues 30–51; that stretch reads LSGYSMFAVGIGALIFGYWRMM.

Belongs to the complex I NDUFA13 subunit family. As to quaternary structure, complex I is composed of 45 different subunits. Interacts with CARD15, but not with CARD4. Interacts with STAT3, but not with STAT1, STAT2 and STAT5A. Interacts with OLFM4.

It is found in the mitochondrion inner membrane. Its subcellular location is the nucleus. Accessory subunit of the mitochondrial membrane respiratory chain NADH dehydrogenase (Complex I), that is believed not to be involved in catalysis. Complex I functions in the transfer of electrons from NADH to the respiratory chain. The immediate electron acceptor for the enzyme is believed to be ubiquinone. Involved in the interferon/all-trans-retinoic acid (IFN/RA) induced cell death. This apoptotic activity is inhibited by interaction with viral IRF1. Prevents the transactivation of STAT3 target genes. May play a role in CARD15-mediated innate mucosal responses and serve to regulate intestinal epithelial cell responses to microbes. The sequence is that of NADH dehydrogenase [ubiquinone] 1 alpha subcomplex subunit 13 (Ndufa13) from Mus musculus (Mouse).